Here is a 302-residue protein sequence, read N- to C-terminus: MCAERLGQFMTLALVLATFDPARGTDATNPPEGPQDRSSQQKGRLSLQNTAEIQHCLVNAGDVGCGVFECFENNSCEIRGLHGICMTFLHNAGKFDAQGKSFIKDALKCKAHALRHRFGCISRKCPAIREMVSQLQRECYLKHDLCAAAQENTRVIVEMIHFKDLLLHEPYVDLVNLLLTCGEEVKEAITHSVQVQCEQNWGSLCSILSFCTSAIQKPPTAPPERQPQVDRTKLSRAHHGEAGHHLPEPSSRETGRGAKGERGSKSHPNAHARGRVGGLGAQGPSGSSEWEDEQSEYSDIRR.

The N-terminal stretch at 1 to 24 (MCAERLGQFMTLALVLATFDPARG) is a signal peptide. Positions 23 to 44 (RGTDATNPPEGPQDRSSQQKGR) are disordered. N-linked (GlcNAc...) asparagine glycosylation is present at Asn73. The tract at residues 217–302 (KPPTAPPERQ…EQSEYSDIRR (86 aa)) is disordered. The segment covering 227–264 (PQVDRTKLSRAHHGEAGHHLPEPSSRETGRGAKGERGS) has biased composition (basic and acidic residues). Residues Ser250 and Ser251 each carry the phosphoserine; by FAM20C modification. Thr254 carries the phosphothreonine; by FAM20C modification.

The protein belongs to the stanniocalcin family. Homodimer; disulfide-linked. In terms of tissue distribution, expressed in a variety of tissues including muscle, heart, pancreas, kidney, spleen, prostate, small intestine, colon and peripheral blood leukocytes.

The protein resides in the secreted. Has an anti-hypocalcemic action on calcium and phosphate homeostasis. The chain is Stanniocalcin-2 (STC2) from Homo sapiens (Human).